A 301-amino-acid polypeptide reads, in one-letter code: 33 kDa chaperonin (301 aa).

Intrachain disulfides connect Cys239-Cys241 and Cys272-Cys275.

It belongs to the HSP33 family. Post-translationally, under oxidizing conditions two disulfide bonds are formed involving the reactive cysteines. Under reducing conditions zinc is bound to the reactive cysteines and the protein is inactive.

Its subcellular location is the cytoplasm. Functionally, redox regulated molecular chaperone. Protects both thermally unfolding and oxidatively damaged proteins from irreversible aggregation. Plays an important role in the bacterial defense system toward oxidative stress. The chain is 33 kDa chaperonin from Nostoc punctiforme (strain ATCC 29133 / PCC 73102).